Consider the following 161-residue polypeptide: MPSFDVVSELDWHEVTNAVDQANREITTRYDFKGVKAHYEIKDKKSVVMEAEAEPQLRQMSDILNQKLVGRGIDLKSLEKEDVVKGNMRASQAVKMKEGLETDEAKKIVKMIKDSKAKVQAQIQGDQLRVTGKKRDDLQQVMALLRGADLAQPVQFTNFRD.

Belongs to the YajQ family.

Nucleotide-binding protein. This is Nucleotide-binding protein Mmwyl1_2033 from Marinomonas sp. (strain MWYL1).